Consider the following 525-residue polypeptide: tRNA-splicing endonuclease subunit Sen54 (525 aa).

The residue at position 1 (methionine 1) is an N-acetylmethionine. The disordered stretch occupies residues 1–46 (MEPEPEPGSVEVPAGRVLSASELRAARSRSQKLPQRSHGPKDFLPD). The span at 7-23 (PGSVEVPAGRVLSASEL) shows a compositional bias: low complexity. At serine 178 the chain carries Phosphoserine. A Phosphotyrosine modification is found at tyrosine 180. Residues 220 to 232 (LPPVSLAASSSPA) show a composition bias toward low complexity. Positions 220–273 (LPPVSLAASSSPACDQSSQYPEEKSQDSSPRQGSELPLQFLGSSEPCSDLARED) are disordered.

This sequence belongs to the SEN54 family. In terms of assembly, tRNA splicing endonuclease is a heterotetramer composed of TSEN2, TSEN15, TSEN34/LENG5 and TSEN54. tRNA splicing endonuclease complex also contains proteins of the pre-mRNA 3'-end processing machinery such as CLP1, CPSF1, CPSF4 and CSTF2.

It is found in the nucleus. The protein localises to the nucleolus. Non-catalytic subunit of the tRNA-splicing endonuclease complex, a complex responsible for identification and cleavage of the splice sites in pre-tRNA. It cleaves pre-tRNA at the 5' and 3' splice sites to release the intron. The products are an intron and two tRNA half-molecules bearing 2',3' cyclic phosphate and 5'-OH termini. There are no conserved sequences at the splice sites, but the intron is invariably located at the same site in the gene, placing the splice sites an invariant distance from the constant structural features of the tRNA body. The tRNA splicing endonuclease is also involved in mRNA processing via its association with pre-mRNA 3'-end processing factors, establishing a link between pre-tRNA splicing and pre-mRNA 3'-end formation, suggesting that the endonuclease subunits function in multiple RNA-processing events. This Mus musculus (Mouse) protein is tRNA-splicing endonuclease subunit Sen54 (Tsen54).